Reading from the N-terminus, the 268-residue chain is GTP cyclohydrolase FolE2 (268 aa).

It belongs to the GTP cyclohydrolase IV family.

It catalyses the reaction GTP + H2O = 7,8-dihydroneopterin 3'-triphosphate + formate + H(+). It participates in cofactor biosynthesis; 7,8-dihydroneopterin triphosphate biosynthesis; 7,8-dihydroneopterin triphosphate from GTP: step 1/1. Converts GTP to 7,8-dihydroneopterin triphosphate. This is GTP cyclohydrolase FolE2 from Paraburkholderia xenovorans (strain LB400).